Consider the following 290-residue polypeptide: Protein MGF 110-9L (290 aa).

Helical transmembrane passes span 1-19 (MKVI…VIQS), 128-148 (TENI…IGYI), and 163-183 (LLIF…IIMN). Asn242 and Asn267 each carry an N-linked (GlcNAc...) asparagine; by host glycan.

This sequence belongs to the asfivirus MGF 110 family.

Its subcellular location is the host membrane. In terms of biological role, plays a role in virus cell tropism, and may be required for efficient virus replication in macrophages. This is Protein MGF 110-9L from Ornithodoros (relapsing fever ticks).